We begin with the raw amino-acid sequence, 258 residues long: Gamma carbonic anhydrase 3, mitochondrial (258 aa).

Residues Met-1–Arg-43 constitute a mitochondrion transit peptide. Substrate is bound by residues Arg-86–Asp-88 and Gln-101–Asp-102. The Zn(2+) site is built by His-107, His-130, and His-135. Asn-209 serves as a coordination point for substrate.

It belongs to the gamma-class carbonic anhydrase family. Homotrimer. Component of the oxidoreductase respiratory chain complex I; element of the extra matrix-exposed domain, which is attached to the membrane arm of this complex. The cofactor is Zn(2+).

The protein resides in the mitochondrion membrane. Functionally, enzyme involved in the catabolism of H(2)CO(3) but that does not mediates the reversible hydration of carbon dioxide. Mediates complex I assembly in mitochondria and respiration. The sequence is that of Gamma carbonic anhydrase 3, mitochondrial (GAMMACA3) from Arabidopsis thaliana (Mouse-ear cress).